The primary structure comprises 383 residues: Deoxyguanosinetriphosphate triphosphohydrolase-like protein (383 aa).

The region spanning 62–198 is the HD domain; sequence RLTHSLEVST…AALADDISYI (137 aa).

Belongs to the dGTPase family. Type 2 subfamily.

The chain is Deoxyguanosinetriphosphate triphosphohydrolase-like protein from Rickettsia bellii (strain RML369-C).